A 463-amino-acid polypeptide reads, in one-letter code: UDP-N-acetylmuramoylalanine--D-glutamate ligase (463 aa).

116–122 lines the ATP pocket; that stretch reads GTNGKTT.

Belongs to the MurCDEF family.

Its subcellular location is the cytoplasm. The catalysed reaction is UDP-N-acetyl-alpha-D-muramoyl-L-alanine + D-glutamate + ATP = UDP-N-acetyl-alpha-D-muramoyl-L-alanyl-D-glutamate + ADP + phosphate + H(+). It functions in the pathway cell wall biogenesis; peptidoglycan biosynthesis. Functionally, cell wall formation. Catalyzes the addition of glutamate to the nucleotide precursor UDP-N-acetylmuramoyl-L-alanine (UMA). In Synechococcus elongatus (strain ATCC 33912 / PCC 7942 / FACHB-805) (Anacystis nidulans R2), this protein is UDP-N-acetylmuramoylalanine--D-glutamate ligase.